Reading from the N-terminus, the 288-residue chain is Energy-coupling factor transporter ATP-binding protein EcfA2 (288 aa).

Positions 3–246 (IKLEQLGYCY…PDELVDLGLS (244 aa)) constitute an ABC transporter domain. 40 to 47 (GHTGSGKS) contributes to the ATP binding site.

It belongs to the ABC transporter superfamily. Energy-coupling factor EcfA family. In terms of assembly, forms a stable energy-coupling factor (ECF) transporter complex composed of 2 membrane-embedded substrate-binding proteins (S component), 2 ATP-binding proteins (A component) and 2 transmembrane proteins (T component).

It localises to the cell membrane. Functionally, ATP-binding (A) component of a common energy-coupling factor (ECF) ABC-transporter complex. Unlike classic ABC transporters this ECF transporter provides the energy necessary to transport a number of different substrates. This Listeria innocua serovar 6a (strain ATCC BAA-680 / CLIP 11262) protein is Energy-coupling factor transporter ATP-binding protein EcfA2.